The sequence spans 255 residues: Ribosomal RNA small subunit methyltransferase A (255 aa).

Residues Asn12, Leu14, Gly39, Glu60, Asp84, and Asn102 each coordinate S-adenosyl-L-methionine.

Belongs to the class I-like SAM-binding methyltransferase superfamily. rRNA adenine N(6)-methyltransferase family. RsmA subfamily.

The protein resides in the cytoplasm. It carries out the reaction adenosine(1518)/adenosine(1519) in 16S rRNA + 4 S-adenosyl-L-methionine = N(6)-dimethyladenosine(1518)/N(6)-dimethyladenosine(1519) in 16S rRNA + 4 S-adenosyl-L-homocysteine + 4 H(+). In terms of biological role, specifically dimethylates two adjacent adenosines (A1518 and A1519) in the loop of a conserved hairpin near the 3'-end of 16S rRNA in the 30S particle. May play a critical role in biogenesis of 30S subunits. This is Ribosomal RNA small subunit methyltransferase A from Methylobacillus flagellatus (strain ATCC 51484 / DSM 6875 / VKM B-1610 / KT).